Consider the following 249-residue polypeptide: DNA repair protein RecO (249 aa).

It belongs to the RecO family.

Its function is as follows. Involved in DNA repair and RecF pathway recombination. The protein is DNA repair protein RecO of Lawsonia intracellularis (strain PHE/MN1-00).